The primary structure comprises 293 residues: Undecaprenyl-diphosphatase (293 aa).

The next 7 helical transmembrane spans lie at 3–23, 43–63, 85–105, 109–129, 203–223, 238–258, and 269–289; these read IALA…EFLP, KGKI…CWEF, INVI…GKAI, LFNP…ILWA, VATE…TVYE, IFAV…RWLL, and FAWY…THLI.

This sequence belongs to the UppP family.

Its subcellular location is the cell inner membrane. It catalyses the reaction di-trans,octa-cis-undecaprenyl diphosphate + H2O = di-trans,octa-cis-undecaprenyl phosphate + phosphate + H(+). In terms of biological role, catalyzes the dephosphorylation of undecaprenyl diphosphate (UPP). Confers resistance to bacitracin. This is Undecaprenyl-diphosphatase from Ralstonia pickettii (strain 12J).